We begin with the raw amino-acid sequence, 159 residues long: Large ribosomal subunit protein uL15 (159 aa).

The span at 1-18 (MKLNEIRDNEGSSKDRIR) shows a compositional bias: basic and acidic residues. The tract at residues 1–37 (MKLNEIRDNEGSSKDRIRVGRGIGSGKGKTGGRGVKG) is disordered. Residues 21–35 (RGIGSGKGKTGGRGV) show a composition bias toward gly residues.

This sequence belongs to the universal ribosomal protein uL15 family. As to quaternary structure, part of the 50S ribosomal subunit.

Functionally, binds to the 23S rRNA. This is Large ribosomal subunit protein uL15 from Agrobacterium fabrum (strain C58 / ATCC 33970) (Agrobacterium tumefaciens (strain C58)).